A 373-amino-acid polypeptide reads, in one-letter code: 3 beta-hydroxysteroid dehydrogenase/Delta 5--&gt;4-isomerase type 1 (373 aa).

NADP(+) is bound by residues 10–15 (GAGGFV), Tyr-155, and Lys-159. Catalysis depends on Lys-159, which acts as the Proton donor. The chain crosses the membrane as a helical span at residues 288–308 (LPLLYWLAFLLETVSFLLRPF).

Belongs to the 3-beta-HSD family. In terms of tissue distribution, adrenal glands, kidney, testes and ovaries.

The protein localises to the endoplasmic reticulum membrane. Its subcellular location is the mitochondrion membrane. It catalyses the reaction a 3beta-hydroxy-Delta(5)-steroid + NAD(+) = a 3-oxo-Delta(5)-steroid + NADH + H(+). The catalysed reaction is pregnenolone + NAD(+) = pregn-5-ene-3,20-dione + NADH + H(+). The enzyme catalyses 3beta-hydroxyandrost-5-en-17-one + NAD(+) = androst-5-ene-3,17-dione + NADH + H(+). It carries out the reaction androst-5-en-3beta,17beta-diol + NAD(+) = 17beta-hydroxy-androst-5-en-3-one + NADH + H(+). It catalyses the reaction a 3beta-hydroxysteroid + NADP(+) = a 3-oxosteroid + NADPH + H(+). The catalysed reaction is 5alpha-androstane-3beta,17beta-diol + NADP(+) = 17beta-hydroxy-5alpha-androstan-3-one + NADPH + H(+). The enzyme catalyses 3beta-hydroxy-5alpha-androstan-17-one + NADP(+) = 5alpha-androstan-3,17-dione + NADPH + H(+). It carries out the reaction a 3-oxo-Delta(5)-steroid = a 3-oxo-Delta(4)-steroid. It catalyses the reaction pregn-5-ene-3,20-dione = progesterone. The catalysed reaction is androst-5-ene-3,17-dione = androst-4-ene-3,17-dione. The enzyme catalyses 17beta-hydroxy-androst-5-en-3-one = testosterone. It carries out the reaction 5alpha-androstane-3beta,17beta-diol + NAD(+) = 17beta-hydroxy-5alpha-androstan-3-one + NADH + H(+). The protein operates within steroid hormone biosynthesis. Its pathway is steroid metabolism. Its function is as follows. A bifunctional enzyme responsible for the oxidation and isomerization of 3beta-hydroxy-Delta(5)-steroid precursors to 3-oxo-Delta(4)-steroids, an essential step in steroid hormone biosynthesis. Specifically catalyzes the conversion of pregnenolone to progesterone, dehydroepiandrosterone (DHEA) to 4-androstenedione, and androstenediol to testosterone. Additionally, catalyzes the interconversion between 3beta-hydroxy and 3-oxo-5alpha-androstane steroids controlling the bioavalability of the active forms. Specifically converts dihydrotestosterone to its inactive form 5alpha-androstanediol, that does not bind androgen receptor/AR. Also converts androstanedione, a precursor of testosterone and estrone, to epiandrosterone. Expected to use NAD(+) as preferred electron donor for the 3beta-hydroxy-steroid dehydrogenase activity and NADPH for the 3-ketosteroid reductase activity. This chain is 3 beta-hydroxysteroid dehydrogenase/Delta 5--&gt;4-isomerase type 1, found in Rattus norvegicus (Rat).